The sequence spans 293 residues: 4-hydroxy-tetrahydrodipicolinate synthase (293 aa).

Residue T46 participates in pyruvate binding. The Proton donor/acceptor role is filled by Y133. Residue K161 is the Schiff-base intermediate with substrate of the active site. A pyruvate-binding site is contributed by V202.

The protein belongs to the DapA family. Homotetramer; dimer of dimers.

It is found in the cytoplasm. It catalyses the reaction L-aspartate 4-semialdehyde + pyruvate = (2S,4S)-4-hydroxy-2,3,4,5-tetrahydrodipicolinate + H2O + H(+). It participates in amino-acid biosynthesis; L-lysine biosynthesis via DAP pathway; (S)-tetrahydrodipicolinate from L-aspartate: step 3/4. Its function is as follows. Catalyzes the condensation of (S)-aspartate-beta-semialdehyde [(S)-ASA] and pyruvate to 4-hydroxy-tetrahydrodipicolinate (HTPA). The protein is 4-hydroxy-tetrahydrodipicolinate synthase of Wolbachia pipientis subsp. Culex pipiens (strain wPip).